The following is a 126-amino-acid chain: UPF0102 protein BCAN_A0183 (126 aa).

Belongs to the UPF0102 family.

This Brucella canis (strain ATCC 23365 / NCTC 10854 / RM-666) protein is UPF0102 protein BCAN_A0183.